The following is a 223-amino-acid chain: Ion-translocating oxidoreductase complex subunit E (223 aa).

Helical transmembrane passes span 17 to 37 (NGVLCMLLGMCPTMAMTGTAT), 40 to 60 (LGMGLATAAVMAASNLMVAMF), 70 to 90 (IPVYILIVAANVTFVDLGMNA), 94 to 114 (ELYKVLGLFIPLIVSNCLPLA), 129 to 149 (FLDGLFMGLGFTLALTAIGAV), and 182 to 202 (WGILVLILPPGGFLIAGLMVV).

It belongs to the NqrDE/RnfAE family. As to quaternary structure, the complex is composed of six subunits: RnfA, RnfB, RnfC, RnfD, RnfE and RnfG.

Its subcellular location is the cell inner membrane. In terms of biological role, part of a membrane-bound complex that couples electron transfer with translocation of ions across the membrane. The polypeptide is Ion-translocating oxidoreductase complex subunit E (Paramagnetospirillum magneticum (strain ATCC 700264 / AMB-1) (Magnetospirillum magneticum)).